We begin with the raw amino-acid sequence, 111 residues long: Large ribosomal subunit protein P1 (111 aa).

Over residues 65–89 the composition is skewed to low complexity; sequence SGAGSGPAPAAAAAAPAAGGAAPAA. A disordered region spans residues 65–111; the sequence is SGAGSGPAPAAAAAAPAAGGAAPAAETKKKEEPKEESDDDMGFGLFD.

The protein belongs to the eukaryotic ribosomal protein P1/P2 family. In terms of assembly, P1 and P2 exist as dimers at the large ribosomal subunit.

Its function is as follows. Plays an important role in the elongation step of protein synthesis. The polypeptide is Large ribosomal subunit protein P1 (Caenorhabditis elegans).